The following is a 235-amino-acid chain: Ferric nitrobindin-like protein (235 aa).

A disordered region spans residues 1–59; the sequence is MSDLASEGSDPAERASEHSNGNAPADRPARRSGDQAVADAAERAKATGSRNIPVLPDLP. The short motif at 85–91 is the GXWXGXG element; that stretch reads GVWRGEG.

It belongs to the nitrobindin family.

The chain is Ferric nitrobindin-like protein from Nocardia farcinica (strain IFM 10152).